The chain runs to 239 residues: 1-(5-phosphoribosyl)-5-[(5-phosphoribosylamino)methylideneamino] imidazole-4-carboxamide isomerase (239 aa).

Asp-8 acts as the Proton acceptor in catalysis. The active-site Proton donor is Asp-129.

This sequence belongs to the HisA/HisF family.

The protein localises to the cytoplasm. The enzyme catalyses 1-(5-phospho-beta-D-ribosyl)-5-[(5-phospho-beta-D-ribosylamino)methylideneamino]imidazole-4-carboxamide = 5-[(5-phospho-1-deoxy-D-ribulos-1-ylimino)methylamino]-1-(5-phospho-beta-D-ribosyl)imidazole-4-carboxamide. It participates in amino-acid biosynthesis; L-histidine biosynthesis; L-histidine from 5-phospho-alpha-D-ribose 1-diphosphate: step 4/9. This Bacillus cereus (strain G9842) protein is 1-(5-phosphoribosyl)-5-[(5-phosphoribosylamino)methylideneamino] imidazole-4-carboxamide isomerase.